We begin with the raw amino-acid sequence, 680 residues long: E3 ubiquitin-protein ligase brl2 (680 aa).

Residues 44 to 72 (RSIQFDELESKIEGLQNLAEEKLKVLATL) are a coiled coil. The disordered stretch occupies residues 206–233 (PQSTKVKEEATTSSKGKDEEKKVSTVEQ). Residues 210–229 (KVKEEATTSSKGKDEEKKVS) show a composition bias toward basic and acidic residues. 3 coiled-coil regions span residues 261–288 (LDSNVNEMDKLIMERENALNNVETTNLK), 353–399 (MQND…ETMV), and 485–609 (DSLH…LKDT). The RING-type zinc-finger motif lies at 627 to 667 (CSVCNFERWKDRIISLCGHGFCYQCIQKRIETRQRRCPICG).

It belongs to the BRE1 family. As to quaternary structure, component of the histone H2B ubiquitin ligase complex (HULC) composed of at least brl1, brl2, rhp6 and shf1.

The protein resides in the nucleus. The catalysed reaction is S-ubiquitinyl-[E2 ubiquitin-conjugating enzyme]-L-cysteine + [acceptor protein]-L-lysine = [E2 ubiquitin-conjugating enzyme]-L-cysteine + N(6)-ubiquitinyl-[acceptor protein]-L-lysine.. The protein operates within protein modification; protein ubiquitination. In terms of biological role, E3 ubiquitin-protein ligase which belongs to the histone H2B ubiquitin ligase complex (HULC) which mediates monoubiquitination of histone H2B to form H2BK123ub1. H2BK123ub1 gives a specific tag for epigenetic transcriptional activation and is also a prerequisite for H3K4me and H3K79me formation. The polypeptide is E3 ubiquitin-protein ligase brl2 (brl2) (Schizosaccharomyces pombe (strain 972 / ATCC 24843) (Fission yeast)).